Consider the following 1070-residue polypeptide: MLEDGKGGITTIPGLNQIQFEGFCRFIDQGLTEELYKFQKIEDIDQEIEFQLFAETYQLVEPLIKERDAVYDSLTYSSELYVSAGLIRKASKDMQEQKIFIGSIPIMNSLGTSIVNGIYRIVINQILQSPGIYYRSELDQNGISVYTGTIISDWGGRSELEIDRKARIWARVSRKQKISILVLSSAMGSNLREIIENVCYPEILLSFLRDKEKKKIGSKENAILEFYKKFACVGGDPLFSESLCKELQNKFFQQRCELGRIGRRNMNRRLHLDIPQNNTFLLPRDILEATDLLIGLKFGMGTLDDMNHLQNKRIRSVADLLQDKFGLALVRLENAVQGTICGAIHHKKIPTPQNLVTSTLLTTTYESFFGLHPLSQVLDRTNPLTQIVHARKVSSLGPGGLTGRTASFRIRDIHPSHYGRICPIDTSEGINVGLIGSLAIHVRIGNWGSLESPFFKISDRLTGVRVLHLSPGRDEYYMVAAGNSLALNQDIQEDLVVPARFRQEFLTIAWEQVNLRSIFPFQYFSIGTSLIPFIEHNDANRALMSSNMQRQAVPLAWSEKCIVGTGVERQAALDSGSLAIAEREGRVIYTDTEKILVSGDGKTISIPLVMYQRSNKNTCMYQQPQVRRGQFIKKGQILADGAATVEGELALGKSVLVAYMPWEGYNYEDAVLISECLVYEDIFTSFHIRKYEIQTHVTTQGPEKVTNEIPHLEAHLIRNLDKNGIVLQGSWVEPGDVLVGKLTPQVVKESSYAPEDRLLRAILGIQVSASKETCLKVPIGGRGRVIDVRWIQKKGGYGYNPEKIRVYILQKREIKVGDKVAGRHGNKGIISKILPRQDMPYLQDGRSVDLVFNPLGVPSRMNVGQIFECSLGLAGSLLDRHYRIAPFDERYEQEASRKIVFSELYEASKQTANPWAFEPEYPGKSRIFDGRTGNTFEHPVLIGKPYILKLIHQVDDKIHGRSSGHYALVTQQPLRGRAKQGGQRVGEMEVWALEGFGVAHILQEMLTYKSDHIRARQEVLGTTIVGGTIPNPKNAPESFRLLVRELRSLALELTHFLVSEKNFQVNKREA.

It belongs to the RNA polymerase beta chain family. As to quaternary structure, in plastids the minimal PEP RNA polymerase catalytic core is composed of four subunits: alpha, beta, beta', and beta''. When a (nuclear-encoded) sigma factor is associated with the core the holoenzyme is formed, which can initiate transcription.

It localises to the plastid. The catalysed reaction is RNA(n) + a ribonucleoside 5'-triphosphate = RNA(n+1) + diphosphate. DNA-dependent RNA polymerase catalyzes the transcription of DNA into RNA using the four ribonucleoside triphosphates as substrates. In Cuscuta exaltata (Tall dodder), this protein is DNA-directed RNA polymerase subunit beta.